The chain runs to 1059 residues: Disks large-associated protein 2 (1059 aa).

Disordered stretches follow at residues 31–54 (GEPE…PAEE) and 245–311 (KSHS…SDST). Polar residues predominate over residues 245–261 (KSHSLEGSSKSNINGTK). Over residues 262 to 271 (SDSRVDDHHQ) the composition is skewed to basic and acidic residues. Residues 272 to 285 (SHLSKHSKRSKSKE) are compositionally biased toward basic residues. Residues Ser-302, Ser-308, Ser-390, and Ser-456 each carry the phosphoserine modification. Residues 613-669 (YKKTPPPVPPRTTSKPLISVTAQSSTESTQDAYQDSRAQRMSPWPQDSRGGLYNSMD) are disordered. Residues 632-645 (VTAQSSTESTQDAY) show a composition bias toward polar residues. 4 positions are modified to phosphoserine: Ser-667, Ser-670, Ser-673, and Ser-720. The tract at residues 723–756 (VQDSEFPDHQPYPRSDVETATDSDTESRGLREYH) is disordered. The residue at position 743 (Thr-743) is a Phosphothreonine. Ser-745 bears the Phosphoserine mark. The span at 747-756 (TESRGLREYH) shows a compositional bias: basic and acidic residues. Phosphoserine is present on residues Ser-776, Ser-811, Ser-983, and Ser-1012. The disordered stretch occupies residues 985–1025 (ERKEERKIPPPIPKKPPKGKFPITREKSLDLPDRQRQEARR). The span at 1007–1025 (ITREKSLDLPDRQRQEARR) shows a compositional bias: basic and acidic residues.

The protein belongs to the SAPAP family. Interacts with DLG4/PSD-95. In terms of tissue distribution, expressed in various brain areas.

The protein localises to the cell membrane. It is found in the postsynaptic density. Its subcellular location is the synapse. Functionally, may play a role in the molecular organization of synapses and neuronal cell signaling. Could be an adapter protein linking ion channel to the subsynaptic cytoskeleton. May induce enrichment of PSD-95/SAP90 at the plasma membrane. The polypeptide is Disks large-associated protein 2 (Mus musculus (Mouse)).